A 274-amino-acid polypeptide reads, in one-letter code: Large ribosomal subunit protein uL2cz/uL2cy (274 aa).

Residues 225–274 (PVDHPHGGGEGRAPIGRKKPVTPWGYPALGRRSRKRKKYSDNLILRRRTK) are disordered.

The protein belongs to the universal ribosomal protein uL2 family. In terms of assembly, part of the 50S ribosomal subunit.

It localises to the plastid. Its subcellular location is the chloroplast. This chain is Large ribosomal subunit protein uL2cz/uL2cy (rpl2-A), found in Lotus japonicus (Lotus corniculatus var. japonicus).